A 677-amino-acid polypeptide reads, in one-letter code: Transmembrane and coiled-coil domain-containing protein 3 (677 aa).

A signal peptide spans 1 to 22 (MKVLGRSFFWVLFPVLPWAVQA). Residues 124–204 (DYKDVVNMKE…EEEIEEHAFD (81 aa)) are a coiled coil. N-linked (GlcNAc...) asparagine glycosylation is found at Asn-206 and Asn-230. 10 consecutive transmembrane segments (helical) span residues 286-306 (WLCT…GVLL), 317-337 (IVQV…LVGL), 350-370 (ISLQ…LLWG), 416-436 (VLLG…AVMP), 456-476 (ILVL…LCLV), 498-518 (EILI…TELL), 554-574 (FLAI…FVAY), 578-598 (VLVF…ALVL), 608-628 (YIKW…FVLG), and 640-660 (EVYL…PVLW).

This sequence belongs to the monovalent cation:proton antiporter 2 (CPA2) transporter (TC 2.A.37) family. In terms of tissue distribution, expressed in the cornea, lens capsule and choroid-retinal pigment epithelium (at protein level).

It localises to the membrane. Its function is as follows. Probable Na(+)/H(+) antiporter. This is Transmembrane and coiled-coil domain-containing protein 3 (TMCO3) from Homo sapiens (Human).